A 192-amino-acid chain; its full sequence is Leucine-rich repeat-containing protein 51 (192 aa).

LRR repeat units lie at residues 49–71 (SLTQ…NQVV), 80–101 (NLAW…LTTF), and 103–124 (NLSV…NKLA). Residues 137–175 (NPIEEEKGYRQYVLCNLPRITTFDFSGVTKADRSTAEVW) enclose the LRRCT domain.

It is found in the cytoplasm. The sequence is that of Leucine-rich repeat-containing protein 51 from Rattus norvegicus (Rat).